A 135-amino-acid chain; its full sequence is Hemoglobin subunit beta-2 (135 aa).

Positions 2 to 135 (HWTAEEKALV…VVDALSKGYH (134 aa)) constitute a Globin domain. Residues His-57 and His-81 each contribute to the heme b site.

This sequence belongs to the globin family. In terms of assembly, hb 2 is a heterotetramer of two alpha and two beta-2 chains. In terms of tissue distribution, red blood cells (at protein level).

Involved in oxygen transport from gills to the various peripheral tissues. The sequence is that of Hemoglobin subunit beta-2 from Somniosus microcephalus (Greenland sleeper shark).